A 692-amino-acid chain; its full sequence is Potassium-transporting ATPase ATP-binding subunit (692 aa).

4 helical membrane-spanning segments follow: residues 50–70, 77–97, 240–260, and 266–286; these read PIMFVVEIGFIITFILSFLPS, GWFNITVSLILLFTVLFANFA, LTLIFLIVVVTLPIFTNYLGF, and VLVALLVCLIPTTIGGLLSAI. The active-site 4-aspartylphosphate intermediate is Asp319. Residues Asp356, Glu360, 388 to 395, and Lys407 contribute to the ATP site; that span reads FKAETRMS. Asp530 and Asp534 together coordinate Mg(2+). Helical transmembrane passes span 600–620, 628–648, and 672–692; these read FAIIPAMFTLAIPQMEALNIM, AILSALIFNAVIIPLLIPLAM, and GGVIVPFIGIKVIDIIVGLFI.

This sequence belongs to the cation transport ATPase (P-type) (TC 3.A.3) family. Type IA subfamily. In terms of assembly, the system is composed of three essential subunits: KdpA, KdpB and KdpC.

Its subcellular location is the cell membrane. The enzyme catalyses K(+)(out) + ATP + H2O = K(+)(in) + ADP + phosphate + H(+). In terms of biological role, part of the high-affinity ATP-driven potassium transport (or Kdp) system, which catalyzes the hydrolysis of ATP coupled with the electrogenic transport of potassium into the cytoplasm. This subunit is responsible for energy coupling to the transport system and for the release of the potassium ions to the cytoplasm. In Bacillus cereus (strain 03BB102), this protein is Potassium-transporting ATPase ATP-binding subunit.